We begin with the raw amino-acid sequence, 344 residues long: uncharacterized protein (344 aa).

Positions 242-343 constitute an HTH araC/xylS-type domain; that stretch reads RGITALVRSK…GVAPSEYSRR (102 aa). DNA-binding regions (H-T-H motif) lie at residues 263–284 and 310–333; these read TDVA…AEEG and VQQV…KRWY.

This is an uncharacterized protein from Mycobacterium bovis (strain ATCC BAA-935 / AF2122/97).